Reading from the N-terminus, the 248-residue chain is Probable phosphatase Sfri_3709 (248 aa).

Zn(2+) is bound by residues histidine 8, histidine 10, histidine 16, histidine 41, glutamate 74, histidine 102, histidine 132, aspartate 193, and histidine 195.

Belongs to the PHP family. Zn(2+) is required as a cofactor.

This is Probable phosphatase Sfri_3709 from Shewanella frigidimarina (strain NCIMB 400).